Consider the following 83-residue polypeptide: ATP synthase subunit c, chloroplastic (83 aa).

The next 2 helical transmembrane spans lie at 4 to 24 (IISAASVIAAGLAVGLAAIGP) and 57 to 77 (LAFMEALTIYGLVVALSLLFA).

This sequence belongs to the ATPase C chain family. F-type ATPases have 2 components, F(1) - the catalytic core - and F(0) - the membrane proton channel. F(1) has five subunits: alpha(3), beta(3), gamma(1), delta(1), epsilon(1). F(0) has four main subunits: a(1), b(1), b'(1) and c(10-14). The alpha and beta chains form an alternating ring which encloses part of the gamma chain. F(1) is attached to F(0) by a central stalk formed by the gamma and epsilon chains, while a peripheral stalk is formed by the delta, b and b' chains.

It localises to the plastid. The protein localises to the chloroplast thylakoid membrane. Its function is as follows. F(1)F(0) ATP synthase produces ATP from ADP in the presence of a proton or sodium gradient. F-type ATPases consist of two structural domains, F(1) containing the extramembraneous catalytic core and F(0) containing the membrane proton channel, linked together by a central stalk and a peripheral stalk. During catalysis, ATP synthesis in the catalytic domain of F(1) is coupled via a rotary mechanism of the central stalk subunits to proton translocation. Functionally, key component of the F(0) channel; it plays a direct role in translocation across the membrane. A homomeric c-ring of between 10-14 subunits forms the central stalk rotor element with the F(1) delta and epsilon subunits. The polypeptide is ATP synthase subunit c, chloroplastic (Galdieria sulphuraria (Red alga)).